A 221-amino-acid chain; its full sequence is Endonuclease V (221 aa).

2 residues coordinate Mg(2+): Asp43 and Asp111.

This sequence belongs to the endonuclease V family. Mg(2+) serves as cofactor.

It localises to the cytoplasm. The enzyme catalyses Endonucleolytic cleavage at apurinic or apyrimidinic sites to products with a 5'-phosphate.. Functionally, DNA repair enzyme involved in the repair of deaminated bases. Selectively cleaves double-stranded DNA at the second phosphodiester bond 3' to a deoxyinosine leaving behind the intact lesion on the nicked DNA. This Azotobacter vinelandii (strain DJ / ATCC BAA-1303) protein is Endonuclease V.